We begin with the raw amino-acid sequence, 128 residues long: uncharacterized protein (128 aa).

2 consecutive transmembrane segments (helical) span residues 52–72 (LLVI…GIFL) and 91–111 (LFVA…VMLI).

The protein resides in the cell membrane. This is an uncharacterized protein from Mycoplasma pneumoniae (strain ATCC 29342 / M129 / Subtype 1) (Mycoplasmoides pneumoniae).